The chain runs to 437 residues: GTPase Der (437 aa).

2 EngA-type G domains span residues 3–167 and 176–352; these read NLVA…NKET and PRFA…ENRT. Residues 9–16, 56–60, 119–122, 182–189, 229–233, and 294–297 contribute to the GTP site; these read GRPNVGKS, DTGGW, NKTD, GRPNAGKS, DTAGI, and NKWD. A KH-like domain is found at 353-437; the sequence is TKIPTARLNE…TPINIYIRQK (85 aa).

It belongs to the TRAFAC class TrmE-Era-EngA-EngB-Septin-like GTPase superfamily. EngA (Der) GTPase family. In terms of assembly, associates with the 50S ribosomal subunit.

GTPase that plays an essential role in the late steps of ribosome biogenesis. The chain is GTPase Der from Bacteroides thetaiotaomicron (strain ATCC 29148 / DSM 2079 / JCM 5827 / CCUG 10774 / NCTC 10582 / VPI-5482 / E50).